The following is a 204-amino-acid chain: MELKVLNISLNSLNTVEVDDTIFARDFNQALVHQVTTAYMSGSRQGSKAQKNRSAVSGGGKRPWAQKGTGRARAGTTRGPIWRSGGVTFATQPRSYAQKVNKKMYKGAISIIFSELVRSERLKVVKEFDIKEVKTKNMIALLKVLNVKDALLMTDELDENLYLSSRNLYHVGVCDTQSIDPVSLIGYDNVVVTELALKKIEVML.

A compositionally biased stretch (polar residues) spans 42–55; sequence GSRQGSKAQKNRSA. The interval 42 to 85 is disordered; sequence GSRQGSKAQKNRSAVSGGGKRPWAQKGTGRARAGTTRGPIWRSG. Low complexity predominate over residues 68-79; that stretch reads GTGRARAGTTRG.

Belongs to the universal ribosomal protein uL4 family. As to quaternary structure, part of the 50S ribosomal subunit.

In terms of biological role, one of the primary rRNA binding proteins, this protein initially binds near the 5'-end of the 23S rRNA. It is important during the early stages of 50S assembly. It makes multiple contacts with different domains of the 23S rRNA in the assembled 50S subunit and ribosome. Functionally, forms part of the polypeptide exit tunnel. In Vesicomyosocius okutanii subsp. Calyptogena okutanii (strain HA), this protein is Large ribosomal subunit protein uL4.